Consider the following 244-residue polypeptide: Anti-H(O) lectin 1 (244 aa).

Asn113 and Asn117 each carry an N-linked (GlcNAc...) asparagine glycan. Mn(2+) contacts are provided by Glu127 and Asp129. 4 residues coordinate Ca(2+): Asp129, Tyr131, Asn137, and Asp142. Positions 142 and 145 each coordinate Mn(2+).

This sequence belongs to the leguminous lectin family. Homotetramer.

Di-N-acetylchitobiose-binding anti-H(O) lectin. The protein is Anti-H(O) lectin 1 of Cytisophyllum sessilifolium (Sessile-leaved cytisus).